The sequence spans 194 residues: Leucyl/phenylalanyl-tRNA--protein transferase (194 aa).

It belongs to the L/F-transferase family.

It localises to the cytoplasm. It carries out the reaction N-terminal L-lysyl-[protein] + L-leucyl-tRNA(Leu) = N-terminal L-leucyl-L-lysyl-[protein] + tRNA(Leu) + H(+). It catalyses the reaction N-terminal L-arginyl-[protein] + L-leucyl-tRNA(Leu) = N-terminal L-leucyl-L-arginyl-[protein] + tRNA(Leu) + H(+). The enzyme catalyses L-phenylalanyl-tRNA(Phe) + an N-terminal L-alpha-aminoacyl-[protein] = an N-terminal L-phenylalanyl-L-alpha-aminoacyl-[protein] + tRNA(Phe). Functions in the N-end rule pathway of protein degradation where it conjugates Leu, Phe and, less efficiently, Met from aminoacyl-tRNAs to the N-termini of proteins containing an N-terminal arginine or lysine. The chain is Leucyl/phenylalanyl-tRNA--protein transferase from Prosthecochloris aestuarii (strain DSM 271 / SK 413).